A 500-amino-acid polypeptide reads, in one-letter code: Neuronal acetylcholine receptor subunit beta-2 (500 aa).

The first 24 residues, 1–24 (MAGHSNSMALFSFSLLWLCSGVLG), serve as a signal peptide directing secretion. Residues 25-237 (TDTEERLVEH…IIRRKPLFYT (213 aa)) lie on the Extracellular side of the membrane. Asn-50 and Asn-167 each carry an N-linked (GlcNAc...) asparagine glycan. A disulfide bond links Cys-154 and Cys-168. A helical transmembrane segment spans residues 238–258 (INLIIPCVLITSLAILVFYLP). Residues 259-266 (SDCGEKMT) are Cytoplasmic-facing. Residues 267 to 287 (LCISVLLALTVFLLLISKIVP) form a helical membrane-spanning segment. The Extracellular portion of the chain corresponds to 288-299 (PTSLDVPLVGKY). Residues 300 to 320 (LMFTMVLVTFSIVTSVCVLNV) traverse the membrane as a helical segment. The Cytoplasmic segment spans residues 321–458 (HHRSPTTHTM…WKYVAMVIDR (138 aa)). The chain crosses the membrane as a helical span at residues 459–479 (LFLWIFVFVCVFGTVGMFLQP).

This sequence belongs to the ligand-gated ion channel (TC 1.A.9) family. Acetylcholine receptor (TC 1.A.9.1) subfamily. Beta-2/CHRNB2 sub-subfamily. Neuronal AChR is a heteropentamer composed of two different types of subunits: alpha and beta. CHRNB2/Beta-2 subunit can be combined to CHRNA2/alpha-2, CHRNA3/alpha-3 or CHRNA4/alpha-4, CHRNA5/alpha-5, CHRNA6/alpha-6 and CHRNB3/beta-3 to give rise to functional receptors. CHRNA2:CHRNB2 and CHRNA4:CHRNB2 nAChR complexes exist in two subtypes: LS (low agonist sensitivity) with a (CHRNA2/4)3:(CHRNB2)2 and HS (high agonist sensitivity) with a (CHRNA2/4)2:(CHRNB2)3 stoichiometry; the subtypes differ in their subunit binding interfaces which are involved in ligand binding. Cells produce predominantly an (CHRNA4)3:(CHRNB2)2 nAChR. The stoichiometric form (CHRNA4)2:(CHRNB2)3 expression is selectively up-regulated by nicotine and has lower single channel conductance and calcium permeability. Also part of the stoichiometric forms: (CHRNA4:CHRNB2)2:CHRNB3 or (CHRNA6:CHRNB2)2:CHRNB3. Can form heteropentamers with CHRNA7, mainly found in basal forebrain cholinergic neurons. Interacts with RIC3; which is required for proper folding and assembly. Interacts with LYPD6. In terms of tissue distribution, expressed in most regions of the CNS.

The protein localises to the synaptic cell membrane. It is found in the cell membrane. The catalysed reaction is Ca(2+)(in) = Ca(2+)(out). The enzyme catalyses K(+)(in) = K(+)(out). It catalyses the reaction Na(+)(in) = Na(+)(out). With respect to regulation, activated by a myriad of ligands such as acetylcholine, cytisine, nicotine, choline and epibatidine. Channel potentiation by calcium is stoichiometry-selective, CHRNA4:CHRNB2 nACh receptor is achieved by calcium association with topographically distinct sites framed by anionic residues within the CHRNA4 subunit and between the CHRNA4 and CHRNB2 subunits. Oligomeric amyloid-beta protein 42 activates specifially CHRNA7:CHRNB2 nAchRs. nAChR activity is inhibited by the antagonist alpha-conotoxins BuIA, PnIA, PnIC, GID and MII, small disulfide-constrained peptides from cone snails. Component of neuronal acetylcholine receptors (nAChRs) that function as pentameric, ligand-gated cation channels with high calcium permeability among other activities. nAChRs are excitatory neurotrasnmitter receptors formed by a collection of nAChR subunits known to mediate synaptic transmission in the nervous system and the neuromuscular junction. Each nAchR subunit confers differential attributes to channel properties, including activation, deactivation and desensitization kinetics, pH sensitivity, cation permeability, and binding to allosteric modulators. CHRNB2 forms heteropentameric neuronal acetylcholine receptors with CHRNA2, CHRNA3, CHRNA4 and CHRNA6, as well as CHRNA5 and CHRNB3 as accesory subunits. Found in two major stoichiometric forms,(CHRNA4)3:(CHRNB2)2 and (CHRNA4)2:(CHRNB2)3, the two stoichiometric forms differ in their unitary conductance, calcium permeability, ACh sensitivity and potentiation by divalent cation. Heteropentameric channels with CHRNA6 and CHRNA4 exhibit high sensitivity to ACh and nicotine and are predominantly expressed in only a few brain areas, including dopaminergic neurons, norepirephrine neurons and cells of the visual system. nAChrs containing CHRNA6 subunits mediate endogenous cholinergic modulation of dopamine and gamma-aminobutyric acid (GABA) release in response to nicotine at nerve terminals. Also forms functional nAChRs with other subunits such as CHRNA7:CHRNB2, mainly expressed in basal forebrain cholinergic neurons. This chain is Neuronal acetylcholine receptor subunit beta-2 (Chrnb2), found in Rattus norvegicus (Rat).